Here is a 273-residue protein sequence, read N- to C-terminus: uncharacterized protein (273 aa).

A helical transmembrane segment spans residues 7-25; it reads FFRWAFLIATVYVAYYFLV. 2 disordered regions span residues 34–154 and 168–273; these read KPQK…LKMK and LHNS…DSLW. Basic residues predominate over residues 36–54; it reads QKSKLTKLGKQKQRQKQKN. The span at 55–91 shows a compositional bias: basic and acidic residues; sequence TKKDTLVNRETPSKKSQKLETSDALKSKSKDSSKKEP. A compositionally biased stretch (low complexity) spans 92-101; sequence VVVPKKGTPK. The span at 115–144 shows a compositional bias: basic and acidic residues; the sequence is PKKEKLVGKNPAEKEDTTDVEDTQKLEQKH. Residues 145–154 are compositionally biased toward polar residues; sequence STTPSSLKMK. A compositionally biased stretch (basic residues) spans 201 to 212; sequence KRQRQNQQKKLR. A compositionally biased stretch (basic and acidic residues) spans 213–240; the sequence is AKEMQELADEEQRRRLAAHRKELHEANR. Residues 245–266 are compositionally biased toward polar residues; that stretch reads LNNSSRSAYSYINNGQAGSSKG.

Its subcellular location is the cytoplasm. It localises to the membrane. This is an uncharacterized protein from Schizosaccharomyces pombe (strain 972 / ATCC 24843) (Fission yeast).